Here is a 403-residue protein sequence, read N- to C-terminus: MGRAKKVVLAYSGGVDTSVCIPYLKHEWGVESVVTLAVDLGQGAELEAIQAKALRAGAEQSLVREAVQTLIADYAFPAIQANALYEQRYPLSTALARPLIAQLLVEVAEEVGADAVAHGCTGKGNDQVRFDLAIAALNPKLKVLAPAREWGMTREETIAYGERYGIPMPVQKSSPYSIDLNILGRSVEAGILEDADQEPPEEVYALTRSIAQTPDEPAYVEIAFEEGIPVELDGQRLGPRALFERLNALAGSHGVGRIDMIEDRLVGIKSREIYECPALTVLIQAHRELESLTLTREVLHYKYGIETTYSQLVYNGLWYSPLREALDAFIRTTQKSVTGVVRMRLHKGQAVCVGRRSPYSLYNAELATYGEGDQFDHRAAEGFIYIWGLPTRTWAQVHRGSGA.

A10 to S18 contacts ATP. Y89 contacts L-citrulline. G119 serves as a coordination point for ATP. T121, N125, and D126 together coordinate L-aspartate. An L-citrulline-binding site is contributed by N125. 5 residues coordinate L-citrulline: R129, S177, S186, E262, and Y274.

The protein belongs to the argininosuccinate synthase family. Type 1 subfamily. In terms of assembly, homotetramer.

It localises to the cytoplasm. It catalyses the reaction L-citrulline + L-aspartate + ATP = 2-(N(omega)-L-arginino)succinate + AMP + diphosphate + H(+). The protein operates within amino-acid biosynthesis; L-arginine biosynthesis; L-arginine from L-ornithine and carbamoyl phosphate: step 2/3. In Synechococcus sp. (strain JA-3-3Ab) (Cyanobacteria bacterium Yellowstone A-Prime), this protein is Argininosuccinate synthase.